The primary structure comprises 521 residues: Probable methylmalonate-semialdehyde/malonate-semialdehyde dehydrogenase [acylating], mitochondrial (521 aa).

NAD(+)-binding residues include F172, K196, E199, R200, and S249. C304 acts as the Nucleophile in catalysis. NAD(+) is bound at residue E404.

Belongs to the aldehyde dehydrogenase family. Homotetramer.

The protein localises to the mitochondrion. It carries out the reaction 2-methyl-3-oxopropanoate + NAD(+) + CoA + H2O = propanoyl-CoA + hydrogencarbonate + NADH + H(+). It catalyses the reaction 3-oxopropanoate + NAD(+) + CoA + H2O = hydrogencarbonate + acetyl-CoA + NADH + H(+). Functionally, probable malonate and methylmalonate semialdehyde dehydrogenase involved in the catabolism of valine, thymine, and compounds catabolized by way of beta-alanine, including uracil and cytidine. This chain is Probable methylmalonate-semialdehyde/malonate-semialdehyde dehydrogenase [acylating], mitochondrial, found in Aedes aegypti (Yellowfever mosquito).